Consider the following 500-residue polypeptide: Aspartyl/glutamyl-tRNA(Asn/Gln) amidotransferase subunit B (500 aa).

Belongs to the GatB/GatE family. GatB subfamily. Heterotrimer of A, B and C subunits.

The catalysed reaction is L-glutamyl-tRNA(Gln) + L-glutamine + ATP + H2O = L-glutaminyl-tRNA(Gln) + L-glutamate + ADP + phosphate + H(+). It carries out the reaction L-aspartyl-tRNA(Asn) + L-glutamine + ATP + H2O = L-asparaginyl-tRNA(Asn) + L-glutamate + ADP + phosphate + 2 H(+). In terms of biological role, allows the formation of correctly charged Asn-tRNA(Asn) or Gln-tRNA(Gln) through the transamidation of misacylated Asp-tRNA(Asn) or Glu-tRNA(Gln) in organisms which lack either or both of asparaginyl-tRNA or glutaminyl-tRNA synthetases. The reaction takes place in the presence of glutamine and ATP through an activated phospho-Asp-tRNA(Asn) or phospho-Glu-tRNA(Gln). The polypeptide is Aspartyl/glutamyl-tRNA(Asn/Gln) amidotransferase subunit B (Brucella anthropi (strain ATCC 49188 / DSM 6882 / CCUG 24695 / JCM 21032 / LMG 3331 / NBRC 15819 / NCTC 12168 / Alc 37) (Ochrobactrum anthropi)).